Here is a 549-residue protein sequence, read N- to C-terminus: Ceramide kinase 1 (549 aa).

In terms of domain architecture, DAGKc spans 162–316 (NRPKNIIIFI…VDVCTVHQHQ (155 aa)). ATP is bound by residues 172–174 (NPF) and 205–209 (TERAN). 233–236 (GGDG) lines the substrate pocket. Aspartate 235 functions as the Proton donor/acceptor in the catalytic mechanism. ATP contacts are provided by residues glutamate 240, 277–279 (GSA), arginine 342, arginine 348, and 500–502 (DGE).

It catalyses the reaction an N-acylsphing-4-enine + ATP = an N-acylsphing-4-enine 1-phosphate + ADP + H(+). The catalysed reaction is an N-acyl-15-methylhexadecasphing-4-enine + ATP = an N-acyl-15-methylhexadecasphing-4-enine-1-phosphate + ADP + H(+). It functions in the pathway lipid metabolism; sphingolipid metabolism. Its function is as follows. Catalyzes the phosphorylation of ceramide to form ceramide 1-phosphate. C.elegans contain specific sphingoid bases, which are unique or different in structure compared to the sphingoid bases found in other animals. Two examples of these distinctive compounds are: 15-methylhexadecasphinganine and 15-methylhexadecasphing-4-enine. The chain is Ceramide kinase 1 from Caenorhabditis elegans.